Here is a 297-residue protein sequence, read N- to C-terminus: tRNA (guanine-N(7)-)-methyltransferase (297 aa).

Residues G101, 124-125, 171-172, and C191 each bind S-adenosyl-L-methionine; these read EI and NT. D194 is an active-site residue. 270–272 lines the S-adenosyl-L-methionine pocket; the sequence is TEE.

This sequence belongs to the class I-like SAM-binding methyltransferase superfamily. TrmB family. In terms of assembly, forms a complex with trm82.

Its subcellular location is the nucleus. It catalyses the reaction guanosine(46) in tRNA + S-adenosyl-L-methionine = N(7)-methylguanosine(46) in tRNA + S-adenosyl-L-homocysteine. It functions in the pathway tRNA modification; N(7)-methylguanine-tRNA biosynthesis. Catalyzes the formation of N(7)-methylguanine at position 46 (m7G46) in tRNA. The chain is tRNA (guanine-N(7)-)-methyltransferase (trm8) from Aspergillus niger (strain ATCC MYA-4892 / CBS 513.88 / FGSC A1513).